A 370-amino-acid polypeptide reads, in one-letter code: Peptide chain release factor 1 (370 aa).

Residue Gln239 is modified to N5-methylglutamine.

This sequence belongs to the prokaryotic/mitochondrial release factor family. Post-translationally, methylated by PrmC. Methylation increases the termination efficiency of RF1.

Its subcellular location is the cytoplasm. In terms of biological role, peptide chain release factor 1 directs the termination of translation in response to the peptide chain termination codons UAG and UAA. This chain is Peptide chain release factor 1, found in Bacteroides thetaiotaomicron (strain ATCC 29148 / DSM 2079 / JCM 5827 / CCUG 10774 / NCTC 10582 / VPI-5482 / E50).